Consider the following 156-residue polypeptide: Deoxyuridine 5'-triphosphate nucleotidohydrolase (156 aa).

Substrate contacts are provided by residues 76-78, N89, 93-95, and K103; these read RSG and TVD.

It belongs to the dUTPase family. Mg(2+) serves as cofactor.

It catalyses the reaction dUTP + H2O = dUMP + diphosphate + H(+). The protein operates within pyrimidine metabolism; dUMP biosynthesis; dUMP from dCTP (dUTP route): step 2/2. This enzyme is involved in nucleotide metabolism: it produces dUMP, the immediate precursor of thymidine nucleotides and it decreases the intracellular concentration of dUTP so that uracil cannot be incorporated into DNA. This chain is Deoxyuridine 5'-triphosphate nucleotidohydrolase, found in Rhizobium rhizogenes (strain K84 / ATCC BAA-868) (Agrobacterium radiobacter).